The primary structure comprises 479 residues: Ribosomal RNA small subunit methyltransferase F (479 aa).

Residues 125-131 (AAAPGSK), glutamate 149, aspartate 176, and aspartate 194 contribute to the S-adenosyl-L-methionine site. Cysteine 247 serves as the catalytic Nucleophile.

Belongs to the class I-like SAM-binding methyltransferase superfamily. RsmB/NOP family.

The protein resides in the cytoplasm. The catalysed reaction is cytidine(1407) in 16S rRNA + S-adenosyl-L-methionine = 5-methylcytidine(1407) in 16S rRNA + S-adenosyl-L-homocysteine + H(+). Functionally, specifically methylates the cytosine at position 1407 (m5C1407) of 16S rRNA. This is Ribosomal RNA small subunit methyltransferase F from Salmonella typhi.